The sequence spans 486 residues: Kynureninase 1 (486 aa).

The segment at 53 to 72 is disordered; sequence DLKRTTLDPNQEPEHSPTPS. Residues leucine 146, threonine 147, 174–177, serine 231, aspartate 260, histidine 263, and tyrosine 285 each bind pyridoxal 5'-phosphate; that span reads FPSD. Residue lysine 286 is modified to N6-(pyridoxal phosphate)lysine. Tryptophan 326 and asparagine 354 together coordinate pyridoxal 5'-phosphate.

This sequence belongs to the kynureninase family. In terms of assembly, homodimer. The cofactor is pyridoxal 5'-phosphate.

Its subcellular location is the cytoplasm. The catalysed reaction is L-kynurenine + H2O = anthranilate + L-alanine + H(+). It carries out the reaction 3-hydroxy-L-kynurenine + H2O = 3-hydroxyanthranilate + L-alanine + H(+). Its pathway is amino-acid degradation; L-kynurenine degradation; L-alanine and anthranilate from L-kynurenine: step 1/1. It participates in cofactor biosynthesis; NAD(+) biosynthesis; quinolinate from L-kynurenine: step 2/3. Catalyzes the cleavage of L-kynurenine (L-Kyn) and L-3-hydroxykynurenine (L-3OHKyn) into anthranilic acid (AA) and 3-hydroxyanthranilic acid (3-OHAA), respectively. The protein is Kynureninase 1 (bna5-1) of Aspergillus clavatus (strain ATCC 1007 / CBS 513.65 / DSM 816 / NCTC 3887 / NRRL 1 / QM 1276 / 107).